A 107-amino-acid chain; its full sequence is MAESHRLYVKGKHLSYQRSKRVNNPNVSLIKIEGVATPQEAQFYLGKRIAYVYRASKEVRGSKIRVMWGKVTRTHGNSGVVRATFRNNLPAKTFGASVRIFLYPSNI.

Ala2 carries the post-translational modification N-acetylalanine; partial. Residue Lys47 forms a Glycyl lysine isopeptide (Lys-Gly) (interchain with G-Cter in ubiquitin) linkage.

It belongs to the eukaryotic ribosomal protein eL33 family. As to quaternary structure, component of the large ribosomal subunit (LSU). Mature yeast ribosomes consist of a small (40S) and a large (60S) subunit. The 40S small subunit contains 1 molecule of ribosomal RNA (18S rRNA) and 33 different proteins (encoded by 57 genes). The large 60S subunit contains 3 rRNA molecules (25S, 5.8S and 5S rRNA) and 46 different proteins (encoded by 81 genes). In terms of processing, N-terminally acetylated by acetyltransferase NatA.

It is found in the cytoplasm. Its function is as follows. Component of the ribosome, a large ribonucleoprotein complex responsible for the synthesis of proteins in the cell. The small ribosomal subunit (SSU) binds messenger RNAs (mRNAs) and translates the encoded message by selecting cognate aminoacyl-transfer RNA (tRNA) molecules. The large subunit (LSU) contains the ribosomal catalytic site termed the peptidyl transferase center (PTC), which catalyzes the formation of peptide bonds, thereby polymerizing the amino acids delivered by tRNAs into a polypeptide chain. The nascent polypeptides leave the ribosome through a tunnel in the LSU and interact with protein factors that function in enzymatic processing, targeting, and the membrane insertion of nascent chains at the exit of the ribosomal tunnel. The protein is Large ribosomal subunit protein eL33B of Saccharomyces cerevisiae (strain ATCC 204508 / S288c) (Baker's yeast).